The chain runs to 267 residues: L-aspartate dehydrogenase (267 aa).

NAD(+) contacts are provided by Ala124 and Asn190. The active site involves His220.

It belongs to the L-aspartate dehydrogenase family.

The catalysed reaction is L-aspartate + NADP(+) + H2O = oxaloacetate + NH4(+) + NADPH + H(+). The enzyme catalyses L-aspartate + NAD(+) + H2O = oxaloacetate + NH4(+) + NADH + H(+). Its pathway is cofactor biosynthesis; NAD(+) biosynthesis; iminoaspartate from L-aspartate (dehydrogenase route): step 1/1. Its function is as follows. Specifically catalyzes the NAD or NADP-dependent dehydrogenation of L-aspartate to iminoaspartate. In Polaromonas sp. (strain JS666 / ATCC BAA-500), this protein is L-aspartate dehydrogenase.